The chain runs to 316 residues: Ribosomal RNA small subunit methyltransferase H (316 aa).

Residues 35-37 (AGH), Asp55, Phe84, Asp105, and Gln112 contribute to the S-adenosyl-L-methionine site.

Belongs to the methyltransferase superfamily. RsmH family.

The protein localises to the cytoplasm. The catalysed reaction is cytidine(1402) in 16S rRNA + S-adenosyl-L-methionine = N(4)-methylcytidine(1402) in 16S rRNA + S-adenosyl-L-homocysteine + H(+). Its function is as follows. Specifically methylates the N4 position of cytidine in position 1402 (C1402) of 16S rRNA. This Streptococcus thermophilus (strain CNRZ 1066) protein is Ribosomal RNA small subunit methyltransferase H.